The primary structure comprises 685 residues: UvrABC system protein B (685 aa).

Positions 39–420 (EGIGDGLMYQ…TYEAEHQGQV (382 aa)) constitute a Helicase ATP-binding domain. ATP is bound at residue 52-59 (GVTGSGKT). Positions 105–128 (YYDYYQPEAYVPSRDLFIEKDSSI) match the Beta-hairpin motif. One can recognise a Helicase C-terminal domain in the interval 443 to 596 (QVDDLLSEAK…QIAFNQANGI (154 aa)). Positions 640 to 675 (AKSIRKLEKEMQEHARNLEFEKAAAARDELFRLRQR) constitute a UVR domain.

Belongs to the UvrB family. As to quaternary structure, forms a heterotetramer with UvrA during the search for lesions. Interacts with UvrC in an incision complex.

It localises to the cytoplasm. The UvrABC repair system catalyzes the recognition and processing of DNA lesions. A damage recognition complex composed of 2 UvrA and 2 UvrB subunits scans DNA for abnormalities. Upon binding of the UvrA(2)B(2) complex to a putative damaged site, the DNA wraps around one UvrB monomer. DNA wrap is dependent on ATP binding by UvrB and probably causes local melting of the DNA helix, facilitating insertion of UvrB beta-hairpin between the DNA strands. Then UvrB probes one DNA strand for the presence of a lesion. If a lesion is found the UvrA subunits dissociate and the UvrB-DNA preincision complex is formed. This complex is subsequently bound by UvrC and the second UvrB is released. If no lesion is found, the DNA wraps around the other UvrB subunit that will check the other stand for damage. This chain is UvrABC system protein B, found in Aromatoleum aromaticum (strain DSM 19018 / LMG 30748 / EbN1) (Azoarcus sp. (strain EbN1)).